Reading from the N-terminus, the 158-residue chain is S-ribosylhomocysteine lyase (158 aa).

Residues His-54, His-58, and Cys-124 each contribute to the Fe cation site.

This sequence belongs to the LuxS family. In terms of assembly, homodimer. Fe cation serves as cofactor.

It catalyses the reaction S-(5-deoxy-D-ribos-5-yl)-L-homocysteine = (S)-4,5-dihydroxypentane-2,3-dione + L-homocysteine. Its function is as follows. Involved in the synthesis of autoinducer 2 (AI-2) which is secreted by bacteria and is used to communicate both the cell density and the metabolic potential of the environment. The regulation of gene expression in response to changes in cell density is called quorum sensing. Catalyzes the transformation of S-ribosylhomocysteine (RHC) to homocysteine (HC) and 4,5-dihydroxy-2,3-pentadione (DPD). The protein is S-ribosylhomocysteine lyase of Lactobacillus johnsonii (strain CNCM I-12250 / La1 / NCC 533).